A 428-amino-acid chain; its full sequence is Glutamyl-tRNA reductase (428 aa).

Residues 49–52, Ser109, 114–116, and Gln120 each bind substrate; these read TCNR and EGQ. Cys50 functions as the Nucleophile in the catalytic mechanism. Residue 189 to 194 coordinates NADP(+); that stretch reads GAGKMS.

It belongs to the glutamyl-tRNA reductase family. Homodimer.

The catalysed reaction is (S)-4-amino-5-oxopentanoate + tRNA(Glu) + NADP(+) = L-glutamyl-tRNA(Glu) + NADPH + H(+). It participates in porphyrin-containing compound metabolism; protoporphyrin-IX biosynthesis; 5-aminolevulinate from L-glutamyl-tRNA(Glu): step 1/2. Its pathway is porphyrin-containing compound metabolism; chlorophyll biosynthesis. Catalyzes the NADPH-dependent reduction of glutamyl-tRNA(Glu) to glutamate 1-semialdehyde (GSA). The chain is Glutamyl-tRNA reductase from Gloeothece citriformis (strain PCC 7424) (Cyanothece sp. (strain PCC 7424)).